Here is a 232-residue protein sequence, read N- to C-terminus: LexA repressor (232 aa).

A disordered region spans residues 1 to 25 (MSDDSSDSTDAPGTSRSRDSGLTER). The span at 16–25 (RSRDSGLTER) shows a compositional bias: basic and acidic residues. Residues 46–66 (IREIGDAVGLTSTSSVAHQLR) constitute a DNA-binding region (H-T-H motif). Active-site for autocatalytic cleavage activity residues include serine 156 and lysine 193.

It belongs to the peptidase S24 family. In terms of assembly, homodimer.

It carries out the reaction Hydrolysis of Ala-|-Gly bond in repressor LexA.. Represses a number of genes involved in the response to DNA damage (SOS response), including recA and lexA. In the presence of single-stranded DNA, RecA interacts with LexA causing an autocatalytic cleavage which disrupts the DNA-binding part of LexA, leading to derepression of the SOS regulon and eventually DNA repair. This chain is LexA repressor, found in Mycolicibacterium gilvum (strain PYR-GCK) (Mycobacterium gilvum (strain PYR-GCK)).